The following is a 44-amino-acid chain: Photosystem I reaction center subunit IX (44 aa).

A helical membrane pass occupies residues 7–27 (YLSAAPVLSTIWFGALAGLLI).

The protein belongs to the PsaJ family.

It localises to the plastid. The protein localises to the chloroplast thylakoid membrane. May help in the organization of the PsaE and PsaF subunits. This Pelargonium hortorum (Common geranium) protein is Photosystem I reaction center subunit IX.